Here is a 383-residue protein sequence, read N- to C-terminus: Chaperone protein DnaJ (383 aa).

In terms of domain architecture, J spans 5–70 (DYYEALGVAR…QKRAAYDQFG (66 aa)). The CR-type zinc-finger motif lies at 139–217 (GTEVQIRVPT…CGGRGRVQSQ (79 aa)). Zn(2+)-binding residues include C152, C155, C169, C172, C191, C194, C205, and C208. CXXCXGXG motif repeat units lie at residues 152 to 159 (CDACDGKG), 169 to 176 (CPTCKGHG), 191 to 198 (CPRCGGSG), and 205 to 212 (CRKCGGRG). The interval 230–249 (TGDRIRLSGEGEPGENGGPP) is disordered.

The protein belongs to the DnaJ family. Homodimer. Zn(2+) is required as a cofactor.

It is found in the cytoplasm. Its function is as follows. Participates actively in the response to hyperosmotic and heat shock by preventing the aggregation of stress-denatured proteins and by disaggregating proteins, also in an autonomous, DnaK-independent fashion. Unfolded proteins bind initially to DnaJ; upon interaction with the DnaJ-bound protein, DnaK hydrolyzes its bound ATP, resulting in the formation of a stable complex. GrpE releases ADP from DnaK; ATP binding to DnaK triggers the release of the substrate protein, thus completing the reaction cycle. Several rounds of ATP-dependent interactions between DnaJ, DnaK and GrpE are required for fully efficient folding. Also involved, together with DnaK and GrpE, in the DNA replication of plasmids through activation of initiation proteins. The chain is Chaperone protein DnaJ from Alkalilimnicola ehrlichii (strain ATCC BAA-1101 / DSM 17681 / MLHE-1).